A 521-amino-acid chain; its full sequence is Citrinin biosynthesis cluster MFS transporter ctnC (521 aa).

The disordered stretch occupies residues 1-29 (MKEEIDAPVSTDASGTDLENARDQPSGEK). Helical transmembrane passes span 58 to 78 (SLITCIFSTLTIWVTFSSSVF), 95 to 115 (VMTLGTSLTVLGFTVGPLVWG), 124 to 144 (LKPLYIGYAIFIIFQVPVAVA), 155 to 175 (FFLGFFGTSALAIIPGALADF), 182 to 202 (AIAISLFSAATFVGPIFGPIM), 237 to 257 (WTAWITMIPASFFGIIAFLTL), 313 to 333 (ILVCMTIYISLIYGILYLFFV), and 349 to 369 (GIAALPFLGILVGVLMGCLLV). An N-linked (GlcNAc...) asparagine glycan is attached at Asn383. Transmembrane regions (helical) follow at residues 392–412 (LPPMIVAAILLPIGLFWFGWT), 417–437 (ISWAPQAIAGAPIGMGILMIW), 465–485 (AVSAAFPLFATAMYHKLGVDW), and 489–509 (LLGFLSIAMIPIPVIFYFYGA).

It belongs to the major facilitator superfamily. CAR1 family.

The protein resides in the membrane. Its function is as follows. MFS transporter; part of the gene cluster that mediates the biosynthesis the mycotoxin citrinin, a hepato-nephrotoxic compound to humans due to inhibition of respiration complex III. The sequence is that of Citrinin biosynthesis cluster MFS transporter ctnC (ctnC) from Monascus purpureus (Red mold).